The primary structure comprises 536 residues: Apoptosis inhibitor 5 homolog (536 aa).

A disordered region spans residues 462–536 (ITFGEKAAAN…GYRNRRFNKY (75 aa)). Residues 472–487 (GKDKDQEPEKKSRPSN) show a composition bias toward basic and acidic residues. Over residues 498–507 (KYSNKVNQSY) the composition is skewed to polar residues. Over residues 516 to 528 (RGGGGGGGSGGGY) the composition is skewed to gly residues.

This sequence belongs to the API5 family.

The protein localises to the nucleus. Antiapoptotic factor. Also known to efficiently suppress E2F1-induced apoptosis. The chain is Apoptosis inhibitor 5 homolog from Drosophila melanogaster (Fruit fly).